Here is a 229-residue protein sequence, read N- to C-terminus: Uracil-DNA glycosylase (229 aa).

Asp-70 functions as the Proton acceptor in the catalytic mechanism.

This sequence belongs to the uracil-DNA glycosylase (UDG) superfamily. UNG family.

The protein resides in the cytoplasm. The enzyme catalyses Hydrolyzes single-stranded DNA or mismatched double-stranded DNA and polynucleotides, releasing free uracil.. Functionally, excises uracil residues from the DNA which can arise as a result of misincorporation of dUMP residues by DNA polymerase or due to deamination of cytosine. This is Uracil-DNA glycosylase from Chlamydia felis (strain Fe/C-56) (Chlamydophila felis).